We begin with the raw amino-acid sequence, 1641 residues long: Alpha-2-macroglobulin (1641 aa).

The first 31 residues, M1 to G31, serve as a signal peptide directing secretion. Residue C32 is the site of N-palmitoyl cysteine attachment. Residue C32 is the site of S-diacylglycerol cysteine attachment. Residues C1166–Q1169 constitute a cross-link (isoglutamyl cysteine thioester (Cys-Gln)).

It belongs to the protease inhibitor I39 (alpha-2-macroglobulin) family. Bacterial alpha-2-macroglobulin subfamily.

The protein localises to the cell membrane. Protects the bacterial cell from host peptidases. The chain is Alpha-2-macroglobulin from Xylella fastidiosa (strain 9a5c).